The primary structure comprises 253 residues: Dof zinc finger protein DOF3.4 (253 aa).

The Dof-type zinc-finger motif lies at 30-84; sequence LPCPRCDSSNTKFCYYNNYNFSQPRHFCKACRRYWTHGGTLRDVPVGGGTRKSAK. Positions 32, 35, 57, and 60 each coordinate Zn(2+). The segment at 73 to 103 is disordered; it reads VPVGGGTRKSAKRSRTCSNSSSSSVSGVVSN. The segment covering 90-103 has biased composition (low complexity); that stretch reads SNSSSSSVSGVVSN.

Interacts with OBF4 or OBF5. In terms of tissue distribution, constitutively expressed in the whole plant.

It is found in the nucleus. Functionally, transcription factor that binds specifically to a 5'-AA[AG]G-3' consensus core sequence. Enhances the DNA binding of OBF transcription factors to OCS elements. The sequence is that of Dof zinc finger protein DOF3.4 (DOF3.4) from Arabidopsis thaliana (Mouse-ear cress).